We begin with the raw amino-acid sequence, 196 residues long: Corticoliberin (196 aa).

The signal sequence occupies residues 1–24 (MRLPLLVSAGVLLVALLPCPPCRA). The propeptide occupies 25–153 (LLSRGPVPGA…HQEAPERERR (129 aa)). Disordered stretches follow at residues 32-61 (PGAR…QPQA), 85-105 (APLS…PSPE), and 136-158 (GARN…EEPP). 2 stretches are compositionally biased toward low complexity: residues 38–47 (PQHPQPLDFF) and 85–104 (APLS…RPSP). Over residues 146–156 (EAPERERRSEE) the composition is skewed to basic and acidic residues. Isoleucine amide is present on I194.

Belongs to the sauvagine/corticotropin-releasing factor/urotensin I family. In terms of assembly, interacts (via C-terminus) with CRFR1 (via N-terminal extracellular domain). Produced by the hypothalamus and placenta.

It is found in the secreted. In terms of biological role, hormone regulating the release of corticotropin from pituitary gland. Induces NLRP6 in intestinal epithelial cells, hence may influence gut microbiota profile. This chain is Corticoliberin (CRH), found in Homo sapiens (Human).